The chain runs to 273 residues: S-adenosylmethionine decarboxylase proenzyme (273 aa).

Serine 118 (schiff-base intermediate with substrate; via pyruvic acid) is an active-site residue. Residue serine 118 is modified to Pyruvic acid (Ser); by autocatalysis. Histidine 123 functions as the Proton acceptor; for processing activity in the catalytic mechanism. Cysteine 146 acts as the Proton donor; for catalytic activity in catalysis.

This sequence belongs to the prokaryotic AdoMetDC family. Type 2 subfamily. As to quaternary structure, heterooctamer of four alpha and four beta chains arranged as a tetramer of alpha/beta heterodimers. The cofactor is pyruvate. In terms of processing, is synthesized initially as an inactive proenzyme. Formation of the active enzyme involves a self-maturation process in which the active site pyruvoyl group is generated from an internal serine residue via an autocatalytic post-translational modification. Two non-identical subunits are generated from the proenzyme in this reaction, and the pyruvate is formed at the N-terminus of the alpha chain, which is derived from the carboxyl end of the proenzyme. The post-translation cleavage follows an unusual pathway, termed non-hydrolytic serinolysis, in which the side chain hydroxyl group of the serine supplies its oxygen atom to form the C-terminus of the beta chain, while the remainder of the serine residue undergoes an oxidative deamination to produce ammonia and the pyruvoyl group blocking the N-terminus of the alpha chain.

The enzyme catalyses S-adenosyl-L-methionine + H(+) = S-adenosyl 3-(methylsulfanyl)propylamine + CO2. It participates in amine and polyamine biosynthesis; S-adenosylmethioninamine biosynthesis; S-adenosylmethioninamine from S-adenosyl-L-methionine: step 1/1. Its function is as follows. Catalyzes the decarboxylation of S-adenosylmethionine to S-adenosylmethioninamine (dcAdoMet), the propylamine donor required for the synthesis of the polyamines spermine and spermidine from the diamine putrescine. This chain is S-adenosylmethionine decarboxylase proenzyme, found in Alkalilimnicola ehrlichii (strain ATCC BAA-1101 / DSM 17681 / MLHE-1).